A 173-amino-acid polypeptide reads, in one-letter code: ATP-dependent protease subunit HslV (173 aa).

The active site involves Thr-2. Residues Gly-158, Asp-161, and Ser-164 each contribute to the Na(+) site.

It belongs to the peptidase T1B family. HslV subfamily. A double ring-shaped homohexamer of HslV is capped on each side by a ring-shaped HslU homohexamer. The assembly of the HslU/HslV complex is dependent on binding of ATP.

It is found in the cytoplasm. The catalysed reaction is ATP-dependent cleavage of peptide bonds with broad specificity.. Allosterically activated by HslU binding. In terms of biological role, protease subunit of a proteasome-like degradation complex believed to be a general protein degrading machinery. The sequence is that of ATP-dependent protease subunit HslV from Mannheimia haemolytica (Pasteurella haemolytica).